We begin with the raw amino-acid sequence, 148 residues long: Lysozyme C (148 aa).

A signal peptide spans Met-1–Gly-18. One can recognise a C-type lysozyme domain in the interval Lys-19–Val-148. Disulfide bonds link Cys-24-Cys-146, Cys-48-Cys-134, Cys-83-Cys-99, and Cys-95-Cys-113. Active-site residues include Glu-53 and Asp-71.

Belongs to the glycosyl hydrolase 22 family. As to quaternary structure, monomer.

The catalysed reaction is Hydrolysis of (1-&gt;4)-beta-linkages between N-acetylmuramic acid and N-acetyl-D-glucosamine residues in a peptidoglycan and between N-acetyl-D-glucosamine residues in chitodextrins.. Its function is as follows. Lysozymes have primarily a bacteriolytic function; those in tissues and body fluids are associated with the monocyte-macrophage system and enhance the activity of immunoagents. The protein is Lysozyme C (LYZ) of Callithrix jacchus (White-tufted-ear marmoset).